We begin with the raw amino-acid sequence, 425 residues long: Serine--tRNA ligase (425 aa).

Residue 230–232 (TAE) participates in L-serine binding. 261-263 (RQE) contributes to the ATP binding site. Glu-284 is an L-serine binding site. An ATP-binding site is contributed by 348-351 (EISS). Ser-384 lines the L-serine pocket.

The protein belongs to the class-II aminoacyl-tRNA synthetase family. Type-1 seryl-tRNA synthetase subfamily. As to quaternary structure, homodimer. The tRNA molecule binds across the dimer.

The protein localises to the cytoplasm. The catalysed reaction is tRNA(Ser) + L-serine + ATP = L-seryl-tRNA(Ser) + AMP + diphosphate + H(+). It carries out the reaction tRNA(Sec) + L-serine + ATP = L-seryl-tRNA(Sec) + AMP + diphosphate + H(+). It functions in the pathway aminoacyl-tRNA biosynthesis; selenocysteinyl-tRNA(Sec) biosynthesis; L-seryl-tRNA(Sec) from L-serine and tRNA(Sec): step 1/1. Functionally, catalyzes the attachment of serine to tRNA(Ser). Is also able to aminoacylate tRNA(Sec) with serine, to form the misacylated tRNA L-seryl-tRNA(Sec), which will be further converted into selenocysteinyl-tRNA(Sec). The sequence is that of Serine--tRNA ligase from Caldanaerobacter subterraneus subsp. tengcongensis (strain DSM 15242 / JCM 11007 / NBRC 100824 / MB4) (Thermoanaerobacter tengcongensis).